Here is a 185-residue protein sequence, read N- to C-terminus: MINDIKKDAQERMEKSVEALKNSLSKVRTGRAHPSLLSGISVDYYGAATPLTQVANVIAEDARTLAITVFDKELTQKVEKAIMMSDLGLNPMSAGTVIRVPLPPLTEERRKDLVKIVRGEAEGGRVAVRNIRRDANSDLKALLKEKEISEDEDRKAQDEIQKLTDAAVKKIDDVLAAKEKELMEV.

Belongs to the RRF family.

It is found in the cytoplasm. Functionally, responsible for the release of ribosomes from messenger RNA at the termination of protein biosynthesis. May increase the efficiency of translation by recycling ribosomes from one round of translation to another. In Vibrio vulnificus (strain YJ016), this protein is Ribosome-recycling factor.